The chain runs to 386 residues: Succinate--CoA ligase [ADP-forming] subunit beta (386 aa).

An ATP-grasp domain is found at 9–244; sequence KAVLRSYGVS…LEEEDSKEIE (236 aa). ATP-binding positions include lysine 46, 53–55, glutamate 99, cysteine 102, and glutamate 107; that span reads GRG. The Mg(2+) site is built by asparagine 199 and aspartate 213. Residues asparagine 264 and 321–323 each bind substrate; that span reads GIM.

Belongs to the succinate/malate CoA ligase beta subunit family. Heterotetramer of two alpha and two beta subunits. It depends on Mg(2+) as a cofactor.

The catalysed reaction is succinate + ATP + CoA = succinyl-CoA + ADP + phosphate. It catalyses the reaction GTP + succinate + CoA = succinyl-CoA + GDP + phosphate. It participates in carbohydrate metabolism; tricarboxylic acid cycle; succinate from succinyl-CoA (ligase route): step 1/1. Succinyl-CoA synthetase functions in the citric acid cycle (TCA), coupling the hydrolysis of succinyl-CoA to the synthesis of either ATP or GTP and thus represents the only step of substrate-level phosphorylation in the TCA. The beta subunit provides nucleotide specificity of the enzyme and binds the substrate succinate, while the binding sites for coenzyme A and phosphate are found in the alpha subunit. This Bacillus mycoides (strain KBAB4) (Bacillus weihenstephanensis) protein is Succinate--CoA ligase [ADP-forming] subunit beta.